Consider the following 579-residue polypeptide: Laccase-4 (579 aa).

An N-terminal signal peptide occupies residues 1–28 (MTMAISSALPSPLLLAASLLLLIVQAQG). Plastocyanin-like domains lie at 36 to 152 (NVQM…PKLG) and 162 to 316 (KEVP…YENP). 2 N-linked (GlcNAc...) asparagine glycosylation sites follow: asparagine 41 and asparagine 82. Residues histidine 86 and histidine 88 each coordinate Cu cation. A glycan (N-linked (GlcNAc...) asparagine) is linked at asparagine 118. Positions 131 and 133 each coordinate Cu cation. Residues asparagine 191, asparagine 207, asparagine 243, asparagine 304, asparagine 340, asparagine 347, asparagine 386, asparagine 393, asparagine 403, asparagine 439, asparagine 446, and asparagine 462 are each glycosylated (N-linked (GlcNAc...) asparagine). The Plastocyanin-like 3 domain maps to 429–563 (DFPVAPLSPF…RMAWLVLDGS (135 aa)). Cu cation is bound by residues histidine 480, histidine 483, histidine 485, histidine 542, cysteine 543, histidine 544, and histidine 548.

Belongs to the multicopper oxidase family. Cu cation is required as a cofactor.

The protein localises to the secreted. It is found in the extracellular space. Its subcellular location is the apoplast. The catalysed reaction is 4 hydroquinone + O2 = 4 benzosemiquinone + 2 H2O. Its function is as follows. Lignin degradation and detoxification of lignin-derived products. The protein is Laccase-4 (LAC4) of Oryza sativa subsp. japonica (Rice).